Here is a 374-residue protein sequence, read N- to C-terminus: Anhydro-N-acetylmuramic acid kinase (374 aa).

Residue 15–22 (GTSADGID) coordinates ATP.

This sequence belongs to the anhydro-N-acetylmuramic acid kinase family.

It carries out the reaction 1,6-anhydro-N-acetyl-beta-muramate + ATP + H2O = N-acetyl-D-muramate 6-phosphate + ADP + H(+). Its pathway is amino-sugar metabolism; 1,6-anhydro-N-acetylmuramate degradation. It participates in cell wall biogenesis; peptidoglycan recycling. Functionally, catalyzes the specific phosphorylation of 1,6-anhydro-N-acetylmuramic acid (anhMurNAc) with the simultaneous cleavage of the 1,6-anhydro ring, generating MurNAc-6-P. Is required for the utilization of anhMurNAc either imported from the medium or derived from its own cell wall murein, and thus plays a role in cell wall recycling. This is Anhydro-N-acetylmuramic acid kinase from Xanthomonas axonopodis pv. citri (strain 306).